The primary structure comprises 790 residues: Protein SEY1 (790 aa).

Residues 1 to 692 lie on the Cytoplasmic side of the membrane; it reads MELSEGELSH…KRSIVQHITQ (692 aa). The GB1/RHD3-type G domain maps to 55–284; the sequence is GNNYHIISVF…VSNELFKPEY (230 aa). 65–72 serves as a coordination point for GTP; sequence GSQSTGKS. A helical membrane pass occupies residues 693-713; sequence IPYYIYLIILVLGWNEFMAII. Topologically, residues 714-716 are lumenal; that stretch reads RNP. A helical membrane pass occupies residues 717–737; that stretch reads LFFSLSIVLGATVYVLYYLGL. The Cytoplasmic portion of the chain corresponds to 738 to 790; sequence LRPALVVAQRTMDEVIVMAKTKLREVLIDDHEVTGRQLNKMAGSKENIELDDM.

This sequence belongs to the TRAFAC class dynamin-like GTPase superfamily. GB1/RHD3 GTPase family. RHD3 subfamily.

It localises to the endoplasmic reticulum membrane. Functionally, cooperates with the reticulon proteins and tubule-shaping DP1 family proteins to generate and maintain the structure of the tubular endoplasmic reticulum network. Has GTPase activity, which is required for its function in ER organization. Required for virulence and resistance to cycloheximide. This Candida albicans (strain SC5314 / ATCC MYA-2876) (Yeast) protein is Protein SEY1.